A 115-amino-acid polypeptide reads, in one-letter code: Non-specific lipid-transfer protein Cw18 (115 aa).

A signal peptide spans 1-25 (MARTAATKLALVALVAAMLLVAADA). 4 disulfide bridges follow: Cys-29–Cys-77, Cys-39–Cys-54, Cys-55–Cys-97, and Cys-75–Cys-111.

It belongs to the plant LTP family. Highly expressed in leaves and coleoptiles. No expression in roots.

Functionally, plant non-specific lipid-transfer proteins transfer phospholipids as well as galactolipids across membranes. May play a role in wax or cutin deposition in the cell walls of expanding epidermal cells and certain secretory tissues. The protein is Non-specific lipid-transfer protein Cw18 (CW18) of Hordeum vulgare (Barley).